The chain runs to 372 residues: MDPLGAAKPQWPWRRCLAALLFQLLVAVCFFSYLRVSRDDATGSPRPGLMAVEPVTGAPSGSSRQDTTPTRPTLLILLWTWPFHIPVALSRCSEMVPGAADCHITADRKVYPQADAVIVHHWDIMYNPKSRLPPSPRPQGQRWIWFNLEPPPNCQHLEALDRYFNLTMSYRSDSDIFTPYGWLEPWSGQPAHPPLNLSAKTELVAWAVSNWKLDSARVRYYQSLQAHLKVDVYGRSHKPLPKGTMMETLSRYKFYLAFENSLHPDYITEKLWRNALEAWAVPVVLGPSRSNYERFLPPDAFIHVDDFQSPKDLARYLQELDKDHARYLSYFRWRETLRPRSFSWALDFCKACWKLQQESRYQTMRSIAAWFT.

Over 1 to 15 (MDPLGAAKPQWPWRR) the chain is Cytoplasmic. A helical; Signal-anchor for type II membrane protein membrane pass occupies residues 16 to 34 (CLAALLFQLLVAVCFFSYL). Topologically, residues 35–372 (RVSRDDATGS…TMRSIAAWFT (338 aa)) are lumenal. Positions 40–69 (DATGSPRPGLMAVEPVTGAPSGSSRQDTTP) are disordered. Residues Asn165 and Asn196 are each glycosylated (N-linked (GlcNAc...) asparagine).

The protein belongs to the glycosyltransferase 10 family. In terms of processing, glycosylated.

Its subcellular location is the golgi apparatus. It is found in the golgi stack membrane. It catalyses the reaction a beta-D-galactosyl-(1-&gt;3)-N-acetyl-beta-D-glucosaminyl derivative + GDP-beta-L-fucose = a beta-D-galactosyl-(1-&gt;3)-[alpha-L-fucosyl-(1-&gt;4)]-N-acetyl-beta-D-glucosaminyl derivative + GDP + H(+). The catalysed reaction is an N-acetyl-alpha-neuraminyl-(2-&gt;3)-beta-D-galactosyl-(1-&gt;4)-N-acetyl-beta-D-glucosaminyl derivative + GDP-beta-L-fucose = an alpha-Neu5Ac-(2-&gt;3)-beta-D-Gal-(1-&gt;4)-[alpha-L-Fuc-(1-&gt;3)]-beta-D-GlcNAc derivative + GDP + H(+). The enzyme catalyses a beta-D-galactosyl-(1-&gt;4)-N-acetyl-beta-D-glucosaminyl derivative + GDP-beta-L-fucose = a beta-D-galactosyl-(1-&gt;4)-[alpha-L-fucosyl-(1-&gt;3)]-N-acetyl-beta-D-glucosaminyl derivative + GDP + H(+). It carries out the reaction an alpha-Neu5Ac-(2-&gt;3)-beta-D-Gal-(1-&gt;4)-beta-D-GlcNAc-(1-&gt;3)-beta-D-Gal-(1-&gt;4)-[alpha-L-Fuc-(1-&gt;3)]-beta-D-GlcNAc derivative + GDP-beta-L-fucose = an alpha-Neu5Ac-(2-&gt;3)-beta-D-Gal-(1-&gt;4)-[alpha-L-Fuc-(1-&gt;3)]-beta-D-GlcNAc-(1-&gt;3)-beta-D-Gal-(1-&gt;4)-[alpha-L-Fuc-(1-&gt;3)]-beta-D-GlcNAc derivative + GDP + H(+). It catalyses the reaction Lc4Cer + GDP-beta-L-fucose = a lactoside III(4)-a-Fuc-Lc4Cer + GDP + H(+). The catalysed reaction is a beta-D-Gal-(1-&gt;3)-beta-D-GlcNAc-(1-&gt;3)-beta-D-Gal-(1-&gt;4)-beta-D-Glc-(1&lt;-&gt;1')-Cer(d18:1(4E)) + GDP-beta-L-fucose = a III(4)-a-Fuc-Lc4Cer(d18:1(4E)) + GDP + H(+). The enzyme catalyses N-acetyl-alpha-neuraminosyl-(2-&gt;3)-beta-D-galactosyl-(1-&gt;3)-[N-acetyl-alpha-neuraminosyl-(2-&gt;6)]-N-acetyl-beta-D-glucosaminyl-(1-&gt;3)-beta-D-galactosyl-(1-&gt;4)-beta-D-glucosyl-(1&lt;-&gt;1')-N-acyl-sphing-4-enine + GDP-beta-L-fucose = N-acetyl-alpha-neuraminosyl-(2-&gt;3)-beta-D-galactosyl-(1-&gt;3)-alpha-L-fucosyl-(1-&gt;4)-[N-acetyl-alpha-neuraminosyl-(2-&gt;6)-N-acetyl-beta-D-glucosaminyl-(1-&gt;3)]-beta-D-galactosyl-(1-&gt;4)-beta-D-glucosyl-(1&lt;-&gt;1')-N-acyl-sphing-4-enine + GDP + H(+). It carries out the reaction N-acetyl-alpha-neuraminosyl-(2-&gt;3)-beta-D-galactosyl-(1-&gt;3)-N-acetyl-beta-D-glucosaminyl-(1-&gt;3)-beta-D-galactosyl-(1-&gt;4)-beta-D-glucosyl-(1&lt;-&gt;1')-N-acyl-sphing-4-enine + GDP-beta-L-fucose = N-acetyl-alpha-neuraminosyl-(2-&gt;3)-beta-D-galactosyl-(1-&gt;3)-alpha-L-fucosyl-(1-&gt;4)-[N-acetyl-beta-D-glucosaminyl-(1-&gt;3)]-beta-D-galactosyl-(1-&gt;4)-beta-D-glucosyl-(1&lt;-&gt;1')-N-acyl-sphing-4-enine + GDP + H(+). It catalyses the reaction beta-D-galactosyl-(1-&gt;3)-N-acetyl-D-glucosamine + GDP-beta-L-fucose = beta-D-galactosyl-(1-&gt;3)-[alpha-L-fucosyl-(1-&gt;4)]-N-acetyl-D-glucosamine + GDP + H(+). The catalysed reaction is alpha-L-Fuc-(1-&gt;2)-beta-D-Gal-(1-&gt;3)-D-GlcNAc + GDP-beta-L-fucose = alpha-L-Fuc-(1-&gt;2)-beta-D-Gal-(1-&gt;3)-[alpha-L-Fuc-(1-&gt;4)]-D-GlcNAc + GDP + H(+). The enzyme catalyses alpha-L-Fuc-(1-&gt;2)-beta-D-Gal-(1-&gt;4)-D-GlcNAc + GDP-beta-L-fucose = alpha-L-Fuc-(1-&gt;2)-beta-D-Gal-(1-&gt;4)-[alpha-L-Fuc-(1-&gt;3)]-D-GlcNAc + GDP + H(+). It carries out the reaction beta-D-galactosyl-(1-&gt;4)-N-acetyl-D-glucosamine + GDP-beta-L-fucose = beta-D-galactosyl-(1-&gt;4)-[alpha-L-fucosyl-(1-&gt;3)]-N-acetyl-D-glucosamine + GDP + H(+). It catalyses the reaction lactose + GDP-beta-L-fucose = beta-D-galactosyl-(1-&gt;4)-[alpha-L-fucosyl-(1-&gt;3)]-D-glucose + GDP + H(+). The catalysed reaction is an alpha-Neu5Ac-(2-&gt;3)-beta-D-Gal-(1-&gt;3)-D-GlcNAc derivative + GDP-beta-L-fucose = an alpha-Neu5Ac-(2-&gt;3)-beta-D-Gal-(1-&gt;3)-[alpha-L-Fuc-(1-&gt;4)]-beta-D-GlcNAc derivative + GDP + H(+). Its pathway is protein modification; protein glycosylation. Catalyzes the transfer of L-fucose, from a guanosine diphosphate-beta-L-fucose, to both the subterminal N-acetyl glucosamine (GlcNAc) of type 1 chain (beta-D-Gal-(1-&gt;3)-beta-D-GlcNAc) glycolipids and oligosaccharides via an alpha(1,4) linkage, and the subterminal glucose (Glc) or GlcNAc of type 2 chain (beta-D-Gal-(1-&gt;4)-beta-D-GlcNAc) oligosaccharides via an alpha(1,3) linkage, independently of the presence of terminal alpha-L-fucosyl-(1,2) moieties on the terminal galactose of these acceptors and participates in the blood groups Lewis determination and expression of Lewis a (Le(a)), lewis b (Le(b)), Lewis x/SSEA-1 (Le(x)) and lewis y (Le(y)) antigens. Also catalyzes the transfer of L-fucose to subterminal GlcNAc of sialyl- and disialyl-lactotetraosylceramide to produce sialyl Lewis a (sLe(a)) and disialyl Lewis a via an alpha(1,4) linkage and therefore may regulate cell surface sialyl Lewis a expression and consequently regulates adhesive properties to E-selectin, cell proliferation and migration. Catalyzes the transfer of an L-fucose to 3'-sialyl-N-acetyllactosamine by an alpha(1,3) linkage, which allows the formation of sialyl-Lewis x structure and therefore may regulate the sialyl-Lewis x surface antigen expression and consequently adhesive properties to E-selectin. Prefers type 1 chain over type 2 acceptors. Type 1 tetrasaccharide is a better acceptor than type 1 disaccharide suggesting that a beta anomeric configuration of GlcNAc in the substrate is preferred. Lewis-positive (Le(+)) individuals have an active enzyme while Lewis-negative (Le(-)) individuals have an inactive enzyme. The polypeptide is 3-galactosyl-N-acetylglucosaminide 4-alpha-L-fucosyltransferase FUT3 (Pan troglodytes (Chimpanzee)).